Here is a 271-residue protein sequence, read N- to C-terminus: Metal-staphylopine import system ATP-binding protein CntD (271 aa).

The 246-residue stretch at valine 6 to leucine 251 folds into the ABC transporter domain. Glycine 38–serine 45 is an ATP binding site.

The protein belongs to the ABC transporter superfamily. In terms of assembly, the complex is composed of two ATP-binding proteins (CntD and CntF), two transmembrane proteins (CntB and CntC) and a solute-binding protein (CntA).

It localises to the cell membrane. With respect to regulation, nickel/cobalt import is reduced in the presence of zinc. Functionally, part of the ABC transporter complex CntABCDF (Opp1) involved in the uptake of metal in complex with the metallophore staphylopine (StP). Involved in the import of divalent metals ions such as nickel, cobalt and zinc. Probably responsible for energy coupling to the transport system. Plays a major role in nickel/cobalt import in zinc-depleted conditions. Contributes to virulence. Required for full urease activity in vitro. This is Metal-staphylopine import system ATP-binding protein CntD from Staphylococcus aureus (strain NCTC 8325 / PS 47).